The sequence spans 370 residues: Protein-glutamate methylesterase/protein-glutamine glutaminase of group 1 operon (370 aa).

The Response regulatory domain occupies 4–121 (KVLVVDDSGF…SRNPDKVKQL (118 aa)). D55 is subject to 4-aspartylphosphate. A compositionally biased stretch (low complexity) spans 150 to 180 (PASTFTSQAQTRPAAPARAAAPTPAASQSPA). Residues 150–183 (PASTFTSQAQTRPAAPARAAAPTPAASQSPAPKR) form a disordered region. A CheB-type methylesterase domain is found at 179–370 (PAPKRKPYKL…IGKHLVEACV (192 aa)). Residues S194, H221, and D314 contribute to the active site.

Belongs to the CheB family. In terms of processing, phosphorylated by CheA. Phosphorylation of the N-terminal regulatory domain activates the methylesterase activity.

It localises to the cytoplasm. The enzyme catalyses [protein]-L-glutamate 5-O-methyl ester + H2O = L-glutamyl-[protein] + methanol + H(+). The catalysed reaction is L-glutaminyl-[protein] + H2O = L-glutamyl-[protein] + NH4(+). In terms of biological role, involved in chemotaxis. Part of a chemotaxis signal transduction system that modulates chemotaxis in response to various stimuli. Catalyzes the demethylation of specific methylglutamate residues introduced into the chemoreceptors (methyl-accepting chemotaxis proteins or MCP) by CheR. Also mediates the irreversible deamidation of specific glutamine residues to glutamic acid. In Pseudomonas putida (strain ATCC 47054 / DSM 6125 / CFBP 8728 / NCIMB 11950 / KT2440), this protein is Protein-glutamate methylesterase/protein-glutamine glutaminase of group 1 operon.